The sequence spans 317 residues: NADH-ubiquinone oxidoreductase chain 1 (317 aa).

The next 9 membrane-spanning stretches (helical) occupy residues Tyr3–Ala23, Pro37–Leu57, Leu69–Ile89, Gly103–Trp123, Leu141–Thr161, Ala173–Ala193, Ser207–Leu227, Gly247–Val267, and Leu282–Leu302.

This sequence belongs to the complex I subunit 1 family.

The protein localises to the mitochondrion inner membrane. It catalyses the reaction a ubiquinone + NADH + 5 H(+)(in) = a ubiquinol + NAD(+) + 4 H(+)(out). Core subunit of the mitochondrial membrane respiratory chain NADH dehydrogenase (Complex I) that is believed to belong to the minimal assembly required for catalysis. Complex I functions in the transfer of electrons from NADH to the respiratory chain. The immediate electron acceptor for the enzyme is believed to be ubiquinone. This Candida albicans (strain SC5314 / ATCC MYA-2876) (Yeast) protein is NADH-ubiquinone oxidoreductase chain 1 (NAD1).